The chain runs to 77 residues: Translation initiation factor IF-1, chloroplastic (77 aa).

The region spanning 1 to 71 (MKEQKWIHEG…TRGRIIYRLR (71 aa)) is the S1-like domain.

This sequence belongs to the IF-1 family. Component of the 30S ribosomal translation pre-initiation complex which assembles on the 30S ribosome in the order IF-2 and IF-3, IF-1 and N-formylmethionyl-tRNA(fMet); mRNA recruitment can occur at any time during PIC assembly.

It localises to the plastid. The protein resides in the chloroplast. One of the essential components for the initiation of protein synthesis. Stabilizes the binding of IF-2 and IF-3 on the 30S subunit to which N-formylmethionyl-tRNA(fMet) subsequently binds. Helps modulate mRNA selection, yielding the 30S pre-initiation complex (PIC). Upon addition of the 50S ribosomal subunit IF-1, IF-2 and IF-3 are released leaving the mature 70S translation initiation complex. The sequence is that of Translation initiation factor IF-1, chloroplastic from Antirrhinum majus (Garden snapdragon).